Consider the following 306-residue polypeptide: tRNA dimethylallyltransferase (306 aa).

13-20 (GPTGAGKT) is a binding site for ATP. A substrate-binding site is contributed by 15–20 (TGAGKT). Interaction with substrate tRNA regions lie at residues 38-41 (DSRQ) and 161-165 (QRNAR).

Belongs to the IPP transferase family. As to quaternary structure, monomer. Mg(2+) is required as a cofactor.

The catalysed reaction is adenosine(37) in tRNA + dimethylallyl diphosphate = N(6)-dimethylallyladenosine(37) in tRNA + diphosphate. Functionally, catalyzes the transfer of a dimethylallyl group onto the adenine at position 37 in tRNAs that read codons beginning with uridine, leading to the formation of N6-(dimethylallyl)adenosine (i(6)A). This Maridesulfovibrio salexigens (strain ATCC 14822 / DSM 2638 / NCIMB 8403 / VKM B-1763) (Desulfovibrio salexigens) protein is tRNA dimethylallyltransferase.